The primary structure comprises 297 residues: 33 kDa chaperonin (297 aa).

2 disulfide bridges follow: Cys-232/Cys-234 and Cys-266/Cys-269.

The protein belongs to the HSP33 family. Under oxidizing conditions two disulfide bonds are formed involving the reactive cysteines. Under reducing conditions zinc is bound to the reactive cysteines and the protein is inactive.

Its subcellular location is the cytoplasm. In terms of biological role, redox regulated molecular chaperone. Protects both thermally unfolding and oxidatively damaged proteins from irreversible aggregation. Plays an important role in the bacterial defense system toward oxidative stress. In Pseudomonas aeruginosa (strain UCBPP-PA14), this protein is 33 kDa chaperonin.